Reading from the N-terminus, the 683-residue chain is Boron transporter 4 (683 aa).

At 1-38 (MEEERVDSSKRLFRGIVADLRGRALCYKEDWVAGLRSG) the chain is on the cytoplasmic side. The chain crosses the membrane as a helical span at residues 39–59 (FGILAPTTYIFFASALPVIAF). Topologically, residues 60-80 (GEQLSRDTEGALSTVETLAST) are extracellular. A helical membrane pass occupies residues 81 to 101 (ALCGVIHSILGGQPLLILGVA). Residues 102 to 126 (EPTVLMYVYLYNFAIGRPELGKQLY) lie on the Cytoplasmic side of the membrane. The helical transmembrane segment at 127-147 (LAWAAWVCVWTALLLFVMAIL) threads the bilayer. Residues 148–160 (NTADIINRFTRVA) lie on the Extracellular side of the membrane. The helical transmembrane segment at 161–181 (GELFGMLISVLFIQQAIKGMV) threads the bilayer. The Cytoplasmic segment spans residues 182–200 (SEFGMPKDEDSKLEKYKFE). Residues 201-221 (WLYTNGLLGLIFTFGLLYTAL) traverse the membrane as a helical segment. Over 222–238 (KSRKARSWRYGTGWYRS) the chain is Extracellular. A helical transmembrane segment spans residues 239–259 (FIADYGVPLMVVVWTALSFST). Residues 260–294 (PSKLPSGVPRRLFSPLPWDSPSLSHWTVIKDMGKV) lie on the Cytoplasmic side of the membrane. Residues 295–315 (SPGYIFAAFIPALMIAGLYFF) traverse the membrane as a helical segment. The Extracellular portion of the chain corresponds to 316 to 335 (DHSVASQLAQQKEFNLKKPS). Residues 336–356 (AYHYDILLLGFMTLICGLLGL) traverse the membrane as a helical segment. Over 357–477 (PPSNGVLPQS…EQRVSNLLQS (121 aa)) the chain is Cytoplasmic. Residues 478–498 (LLVAGAVLAMPAIKLIPTSIL) traverse the membrane as a helical segment. At 499–565 (WGYFAYMAID…QIFYFGLCYG (67 aa)) the chain is on the extracellular side. The chain crosses the membrane as a helical span at residues 566–586 (VTWIPVAGIMFPVPFFLLIAI). Residues 587 to 683 (RQYILPKLFN…GDGDMSTTRE (97 aa)) are Cytoplasmic-facing. Disordered regions lie at residues 617-638 (NPLE…GDAE) and 661-683 (KGNQ…TTRE).

Belongs to the anion exchanger (TC 2.A.31.3) family. As to expression, expressed in the distal sides of epidermal cells in the elongation zone of roots.

The protein resides in the membrane. Functionally, efflux-type boron transporter polarly localized in roots. Boron is essential for maintaining the integrity of plants cell walls. The chain is Boron transporter 4 (BOR4) from Arabidopsis thaliana (Mouse-ear cress).